The sequence spans 76 residues: Large ribosomal subunit protein eL38 (76 aa).

The protein belongs to the eukaryotic ribosomal protein eL38 family.

This chain is Large ribosomal subunit protein eL38 (RpL38), found in Lysiphlebus testaceipes (Greenbugs aphid parastoid).